The chain runs to 207 residues: dTTP/UTP pyrophosphatase (207 aa).

Aspartate 87 (proton acceptor) is an active-site residue.

The protein belongs to the Maf family. YhdE subfamily. The cofactor is a divalent metal cation.

The protein resides in the cytoplasm. The catalysed reaction is dTTP + H2O = dTMP + diphosphate + H(+). It catalyses the reaction UTP + H2O = UMP + diphosphate + H(+). In terms of biological role, nucleoside triphosphate pyrophosphatase that hydrolyzes dTTP and UTP. May have a dual role in cell division arrest and in preventing the incorporation of modified nucleotides into cellular nucleic acids. This chain is dTTP/UTP pyrophosphatase, found in Bordetella pertussis (strain Tohama I / ATCC BAA-589 / NCTC 13251).